Consider the following 304-residue polypeptide: 2-oxoacid:ferredoxin oxidoreductase 2, subunit beta (304 aa).

[4Fe-4S] cluster is bound by residues Cys-12, Cys-15, and Cys-46. Thiamine diphosphate contacts are provided by residues 44 to 47 (IGCS) and His-65. Asp-90 lines the Mg(2+) pocket. A thiamine diphosphate-binding site is contributed by 91-92 (GD). The Mg(2+) site is built by Asn-118 and Val-120. 122–123 (GL) serves as a coordination point for thiamine diphosphate. Cys-197 lines the [4Fe-4S] cluster pocket.

In terms of assembly, heterodimer composed of an alpha and a beta subunit. The cofactor is [4Fe-4S] cluster. Thiamine diphosphate serves as cofactor. Mg(2+) is required as a cofactor.

It carries out the reaction a 2-oxocarboxylate + 2 oxidized [2Fe-2S]-[ferredoxin] + CoA = an acyl-CoA + 2 reduced [2Fe-2S]-[ferredoxin] + CO2 + H(+). Functionally, catalyzes the coenzyme A-dependent oxidative decarboxylation of different 2-oxoacids such as 2-oxoglutarate, pyruvate and 2-oxobutyrate to form their CoA derivatives. This chain is 2-oxoacid:ferredoxin oxidoreductase 2, subunit beta, found in Sulfurisphaera tokodaii (strain DSM 16993 / JCM 10545 / NBRC 100140 / 7) (Sulfolobus tokodaii).